The primary structure comprises 469 residues: Serine carboxypeptidase-like 41 (469 aa).

The signal sequence occupies residues 1–20 (MAIVSLRDVAMVMVTVQVFA). 3 disulfide bridges follow: Cys83–Cys342, Cys243–Cys260, and Cys285–Cys310. A glycan (N-linked (GlcNAc...) asparagine) is linked at Asn134. Ser175 is a catalytic residue. Asn255 carries an N-linked (GlcNAc...) asparagine glycan. Residues Asn331 and Asn347 are each glycosylated (N-linked (GlcNAc...) asparagine). Catalysis depends on residues Asp379 and His436. Asn461 carries N-linked (GlcNAc...) asparagine glycosylation.

Belongs to the peptidase S10 family. In terms of tissue distribution, expressed in flowers.

The protein resides in the secreted. Functionally, probable carboxypeptidase. The chain is Serine carboxypeptidase-like 41 (SCPL41) from Arabidopsis thaliana (Mouse-ear cress).